The primary structure comprises 291 residues: Cilia- and flagella-associated protein 298 (291 aa).

This sequence belongs to the CFAP298 family.

In Drosophila melanogaster (Fruit fly), this protein is Cilia- and flagella-associated protein 298.